The sequence spans 755 residues: Xaa-Pro dipeptidyl-peptidase (755 aa).

Catalysis depends on charge relay system residues serine 348, aspartate 468, and histidine 498.

The protein belongs to the peptidase S15 family. As to quaternary structure, homodimer.

It is found in the cytoplasm. The catalysed reaction is Hydrolyzes Xaa-Pro-|- bonds to release unblocked, N-terminal dipeptides from substrates including Ala-Pro-|-p-nitroanilide and (sequentially) Tyr-Pro-|-Phe-Pro-|-Gly-Pro-|-Ile.. Removes N-terminal dipeptides sequentially from polypeptides having unsubstituted N-termini provided that the penultimate residue is proline. This Streptococcus thermophilus (strain ATCC BAA-491 / LMD-9) protein is Xaa-Pro dipeptidyl-peptidase.